Consider the following 442-residue polypeptide: C4-dicarboxylate transport protein (442 aa).

The next 8 helical transmembrane spans lie at 10-30, 40-60, 77-97, 144-164, 183-203, 221-241, 331-351, and 354-374; these read VQVL…PSLG, FIKL…VSGI, LLYF…IVNI, FTQG…FALL, VIFV…FGAM, LMIT…GLIA, LLGV…SGFI, and AATL…ILGI. Residues 418–442 form a disordered region; that stretch reads LPTIEPDVHSEERGEGRELDSLRPA. The segment covering 423-442 has biased composition (basic and acidic residues); it reads PDVHSEERGEGRELDSLRPA.

The protein belongs to the dicarboxylate/amino acid:cation symporter (DAACS) (TC 2.A.23) family.

The protein resides in the cell membrane. Functionally, responsible for the transport of dicarboxylates such as succinate, fumarate, and malate across the membrane. In Deinococcus deserti (strain DSM 17065 / CIP 109153 / LMG 22923 / VCD115), this protein is C4-dicarboxylate transport protein.